Consider the following 288-residue polypeptide: Phosphatidylserine decarboxylase proenzyme (288 aa).

Residues aspartate 91, histidine 148, and serine 254 each act as charge relay system; for autoendoproteolytic cleavage activity in the active site. Serine 254 serves as the catalytic Schiff-base intermediate with substrate; via pyruvic acid; for decarboxylase activity. Serine 254 is subject to Pyruvic acid (Ser); by autocatalysis.

It belongs to the phosphatidylserine decarboxylase family. PSD-B subfamily. Prokaryotic type I sub-subfamily. As to quaternary structure, heterodimer of a large membrane-associated beta subunit and a small pyruvoyl-containing alpha subunit. Pyruvate is required as a cofactor. Post-translationally, is synthesized initially as an inactive proenzyme. Formation of the active enzyme involves a self-maturation process in which the active site pyruvoyl group is generated from an internal serine residue via an autocatalytic post-translational modification. Two non-identical subunits are generated from the proenzyme in this reaction, and the pyruvate is formed at the N-terminus of the alpha chain, which is derived from the carboxyl end of the proenzyme. The autoendoproteolytic cleavage occurs by a canonical serine protease mechanism, in which the side chain hydroxyl group of the serine supplies its oxygen atom to form the C-terminus of the beta chain, while the remainder of the serine residue undergoes an oxidative deamination to produce ammonia and the pyruvoyl prosthetic group on the alpha chain. During this reaction, the Ser that is part of the protease active site of the proenzyme becomes the pyruvoyl prosthetic group, which constitutes an essential element of the active site of the mature decarboxylase.

It is found in the cell membrane. It carries out the reaction a 1,2-diacyl-sn-glycero-3-phospho-L-serine + H(+) = a 1,2-diacyl-sn-glycero-3-phosphoethanolamine + CO2. The protein operates within phospholipid metabolism; phosphatidylethanolamine biosynthesis; phosphatidylethanolamine from CDP-diacylglycerol: step 2/2. Its function is as follows. Catalyzes the formation of phosphatidylethanolamine (PtdEtn) from phosphatidylserine (PtdSer). In Pseudoalteromonas translucida (strain TAC 125), this protein is Phosphatidylserine decarboxylase proenzyme.